The chain runs to 87 residues: Small ribosomal subunit protein uS17 (87 aa).

It belongs to the universal ribosomal protein uS17 family. In terms of assembly, part of the 30S ribosomal subunit.

In terms of biological role, one of the primary rRNA binding proteins, it binds specifically to the 5'-end of 16S ribosomal RNA. This Thioalkalivibrio sulfidiphilus (strain HL-EbGR7) protein is Small ribosomal subunit protein uS17.